A 307-amino-acid polypeptide reads, in one-letter code: Protease HtpX homolog (307 aa).

A helical membrane pass occupies residues 16 to 36 (LFMGVGYLIGGAAGAMIALVV). H130 is a binding site for Zn(2+). The active site involves E131. A Zn(2+)-binding site is contributed by H134. Helical transmembrane passes span 145-165 (ITATIAGAISMLAQFGMFFGG) and 172-192 (GPGIIGSLAMMILAPLGAMLV). E201 is a binding site for Zn(2+). A disordered region spans residues 278-307 (AGQSGSATPDPAPAPRGPWNGGAPRRGPWG).

Belongs to the peptidase M48B family. It depends on Zn(2+) as a cofactor.

The protein localises to the cell inner membrane. The protein is Protease HtpX homolog of Nitrobacter hamburgensis (strain DSM 10229 / NCIMB 13809 / X14).